Reading from the N-terminus, the 407-residue chain is Na(+)-translocating NADH-quinone reductase subunit F (407 aa).

Residues 4–24 (IILGVFFFTAIVVALVFVILG) form a helical membrane-spanning segment. The 2Fe-2S ferredoxin-type domain occupies 33–125 (GNVEVLINGE…NMKIHVHEEV (93 aa)). [2Fe-2S] cluster contacts are provided by cysteine 68, cysteine 74, cysteine 77, and cysteine 109. In terms of domain architecture, FAD-binding FR-type spans 128–269 (VKKWECTVRS…SGPFGEFFAR (142 aa)).

The protein belongs to the NqrF family. As to quaternary structure, composed of six subunits; NqrA, NqrB, NqrC, NqrD, NqrE and NqrF. The cofactor is [2Fe-2S] cluster. Requires FAD as cofactor.

It localises to the cell inner membrane. The catalysed reaction is a ubiquinone + n Na(+)(in) + NADH + H(+) = a ubiquinol + n Na(+)(out) + NAD(+). Its function is as follows. NQR complex catalyzes the reduction of ubiquinone-1 to ubiquinol by two successive reactions, coupled with the transport of Na(+) ions from the cytoplasm to the periplasm. The first step is catalyzed by NqrF, which accepts electrons from NADH and reduces ubiquinone-1 to ubisemiquinone by a one-electron transfer pathway. The protein is Na(+)-translocating NADH-quinone reductase subunit F of Methylococcus capsulatus (strain ATCC 33009 / NCIMB 11132 / Bath).